Here is a 727-residue protein sequence, read N- to C-terminus: FACT complex subunit Ssrp1 (727 aa).

Disordered regions lie at residues 458-565 (AEAR…AFML) and 596-727 (ELKD…EGSD). 2 stretches are compositionally biased toward acidic residues: residues 464–479 (EEEDDDGDDSDEESTD) and 487–508 (NESDVAEEYDSNVEDDSDDDSD). Residues 510 to 519 (SGGGGDGGTD) show a composition bias toward gly residues. Composition is skewed to basic and acidic residues over residues 529–555 (KKNEKKEKTHKEKEKIKKPTKKKDTGK), 596–620 (ELKDKSKWEEAANKDKIRYQEEMRN), and 675–703 (DQEKVKEIPKKKNKSTAEDKDKNSKKSES). The HMG box DNA-binding region spans 556-622 (PKRGTSAFML…RYQEEMRNYK (67 aa)). Positions 704 to 727 (EGGDSDDASNASEDDDEEEDEGSD) are enriched in acidic residues.

Belongs to the SSRP1 family. As to quaternary structure, component of the FACT complex, a stable heterodimer of dre4/spt16 and Ssrp.

The protein localises to the nucleus. It is found in the chromosome. It localises to the nucleolus. Component of the FACT complex, a general chromatin factor that acts to reorganize nucleosomes. The FACT complex is involved in multiple processes that require DNA as a template such as mRNA elongation, DNA replication and DNA repair. During transcription elongation the FACT complex acts as a histone chaperone that both destabilizes and restores nucleosomal structure. It facilitates the passage of RNA polymerase II and transcription by promoting the dissociation of one histone H2A-H2B dimer from the nucleosome, then subsequently promotes the reestablishment of the nucleosome following the passage of RNA polymerase II. Binds specifically to single-stranded DNA and RNA with highest affinity for nucleotides G and U. The FACT complex is required for expression of Hox genes. The sequence is that of FACT complex subunit Ssrp1 (Ssrp) from Drosophila pseudoobscura pseudoobscura (Fruit fly).